Consider the following 710-residue polypeptide: Subtilisin-like protease SBT4.8 (710 aa).

Positions 1–23 (MVKRASFCLLSCLIILFLSSVSA) are cleaved as a signal peptide. Residues 24–111 (IIYDPQDKQV…VFRSKNYKLQ (88 aa)) constitute a propeptide, activation peptide. Positions 33–110 (VYVVYMGSLP…SVFRSKNYKL (78 aa)) constitute an Inhibitor I9 domain. The Peptidase S8 domain occupies 115–559 (SWDFMGMKEG…AGHVDPIAAI (445 aa)). The Charge relay system role is filled by aspartate 143. An N-linked (GlcNAc...) asparagine glycan is attached at asparagine 174. Histidine 198 serves as the catalytic Charge relay system. N-linked (GlcNAc...) asparagine glycans are attached at residues asparagine 221, asparagine 364, and asparagine 419. The 61-residue stretch at 354 to 414 (KYPLEYGDYL…VLSQDDFDSL (61 aa)) folds into the PA domain. Serine 498 acts as the Charge relay system in catalysis. 5 N-linked (GlcNAc...) asparagine glycosylation sites follow: asparagine 535, asparagine 568, asparagine 580, asparagine 618, and asparagine 636.

Belongs to the peptidase S8 family. In terms of processing, the C-terminal propeptide is autocleaved.

It is found in the secreted. The sequence is that of Subtilisin-like protease SBT4.8 from Arabidopsis thaliana (Mouse-ear cress).